Consider the following 88-residue polypeptide: DNA-directed RNA polymerase subunit omega (88 aa).

Belongs to the RNA polymerase subunit omega family. The RNAP catalytic core consists of 2 alpha, 1 beta, 1 beta' and 1 omega subunit. When a sigma factor is associated with the core the holoenzyme is formed, which can initiate transcription.

It catalyses the reaction RNA(n) + a ribonucleoside 5'-triphosphate = RNA(n+1) + diphosphate. Promotes RNA polymerase assembly. Latches the N- and C-terminal regions of the beta' subunit thereby facilitating its interaction with the beta and alpha subunits. The sequence is that of DNA-directed RNA polymerase subunit omega from Kineococcus radiotolerans (strain ATCC BAA-149 / DSM 14245 / SRS30216).